The sequence spans 449 residues: Maturation protein A (449 aa).

The protein belongs to the Leviviricetes maturation protein family. As to quaternary structure, interacts with the host pilus.

The protein localises to the virion. In terms of biological role, the maturation protein is required for the typical attachment of the phage to the side of the bacterial F-pili. Binds to sequences located toward each end of the genome, hence circularizing it. The RNA genome-maturation protein A complex is released from the capsid upon host receptor binding. Maturation protein A enters the cell along with the viral RNA. The polypeptide is Maturation protein A (Pseudomonas aeruginosa (Bacteriophage PP7)).